We begin with the raw amino-acid sequence, 261 residues long: MAALTADRVSVRYPGQAQPALDGVSLNVGPGELAVALGPSGCGKTTLLNLFAGFQFPDSGSVRFGGVPVAGPGAERAVVFQQHALLPWLSALDNVAFGLRLRGVPRAERRELAGRALAQVDLAEAGARYPWQLSGGQKQRVGIARALAGRAGALLMDEPFGALDAFTREQMQELLLKVWAESGSSVFLITHDIEEALFLATELVLMSPGPGRIVKTLRPPFSRRWRAGDSARAIKSDPEFIALREQLLADVFAQRKQEAWA.

Positions 4-233 (LTADRVSVRY…RWRAGDSARA (230 aa)) constitute an ABC transporter domain. 38-45 (GPSGCGKT) serves as a coordination point for ATP.

It belongs to the ABC transporter superfamily. Taurine importer (TC 3.A.1.17.1) family. As to quaternary structure, the complex is composed of two ATP-binding proteins (TauB), two transmembrane proteins (TauC) and a solute-binding protein (TauA).

It is found in the cell inner membrane. The enzyme catalyses taurine(out) + ATP + H2O = taurine(in) + ADP + phosphate + H(+). Functionally, part of the ABC transporter complex TauABC involved in taurine import. Responsible for energy coupling to the transport system. This is Taurine import ATP-binding protein TauB from Chromobacterium violaceum (strain ATCC 12472 / DSM 30191 / JCM 1249 / CCUG 213 / NBRC 12614 / NCIMB 9131 / NCTC 9757 / MK).